The chain runs to 509 residues: Probable glycine dehydrogenase (decarboxylating) subunit 2 (509 aa).

Position 278 is an N6-(pyridoxal phosphate)lysine (Lys278).

This sequence belongs to the GcvP family. C-terminal subunit subfamily. As to quaternary structure, the glycine cleavage system is composed of four proteins: P, T, L and H. In this organism, the P 'protein' is a heterodimer of two subunits. It depends on pyridoxal 5'-phosphate as a cofactor.

The catalysed reaction is N(6)-[(R)-lipoyl]-L-lysyl-[glycine-cleavage complex H protein] + glycine + H(+) = N(6)-[(R)-S(8)-aminomethyldihydrolipoyl]-L-lysyl-[glycine-cleavage complex H protein] + CO2. In terms of biological role, the glycine cleavage system catalyzes the degradation of glycine. The P protein binds the alpha-amino group of glycine through its pyridoxal phosphate cofactor; CO(2) is released and the remaining methylamine moiety is then transferred to the lipoamide cofactor of the H protein. This chain is Probable glycine dehydrogenase (decarboxylating) subunit 2, found in Saccharolobus islandicus (strain Y.N.15.51 / Yellowstone #2) (Sulfolobus islandicus).